The following is a 154-amino-acid chain: Minor structural pilin EpdC (154 aa).

Positions 1–13 (MIKMLQLPFNKKG) are excised as a propeptide. A QXSXEXXXL motif is present at residues 14–24 (QVSFDFIIAML).

In terms of processing, the N-terminus is cleaved by the prepilin peptidase EppA, which recognizes the class III signal sequence.

It is found in the secreted. The protein resides in the cell surface. Its subcellular location is the fimbrium. Its function is as follows. Minor component of the type IV-like pili. Essential for pili formation. The polypeptide is Minor structural pilin EpdC (Methanococcus maripaludis (strain DSM 14266 / JCM 13030 / NBRC 101832 / S2 / LL)).